The sequence spans 185 residues: Ribose 1,5-bisphosphate phosphokinase PhnN (185 aa).

This sequence belongs to the ribose 1,5-bisphosphokinase family.

The catalysed reaction is alpha-D-ribose 1,5-bisphosphate + ATP = 5-phospho-alpha-D-ribose 1-diphosphate + ADP. It participates in metabolic intermediate biosynthesis; 5-phospho-alpha-D-ribose 1-diphosphate biosynthesis; 5-phospho-alpha-D-ribose 1-diphosphate from D-ribose 5-phosphate (route II): step 3/3. Functionally, catalyzes the phosphorylation of ribose 1,5-bisphosphate to 5-phospho-D-ribosyl alpha-1-diphosphate (PRPP). In Escherichia coli (strain SMS-3-5 / SECEC), this protein is Ribose 1,5-bisphosphate phosphokinase PhnN.